Consider the following 113-residue polypeptide: Large ribosomal subunit protein uL22 (113 aa).

Belongs to the universal ribosomal protein uL22 family. In terms of assembly, part of the 50S ribosomal subunit.

In terms of biological role, this protein binds specifically to 23S rRNA; its binding is stimulated by other ribosomal proteins, e.g. L4, L17, and L20. It is important during the early stages of 50S assembly. It makes multiple contacts with different domains of the 23S rRNA in the assembled 50S subunit and ribosome. Its function is as follows. The globular domain of the protein is located near the polypeptide exit tunnel on the outside of the subunit, while an extended beta-hairpin is found that lines the wall of the exit tunnel in the center of the 70S ribosome. This Xanthomonas axonopodis pv. citri (strain 306) protein is Large ribosomal subunit protein uL22.